A 197-amino-acid polypeptide reads, in one-letter code: NADH-quinone oxidoreductase subunit B (197 aa).

Positions 76, 77, 141, and 171 each coordinate [4Fe-4S] cluster.

The protein belongs to the complex I 20 kDa subunit family. NDH-1 is composed of 14 different subunits. Subunits NuoB, C, D, E, F, and G constitute the peripheral sector of the complex. The cofactor is [4Fe-4S] cluster.

Its subcellular location is the cell inner membrane. The enzyme catalyses a quinone + NADH + 5 H(+)(in) = a quinol + NAD(+) + 4 H(+)(out). Its function is as follows. NDH-1 shuttles electrons from NADH, via FMN and iron-sulfur (Fe-S) centers, to quinones in the respiratory chain. The immediate electron acceptor for the enzyme in this species is believed to be ubiquinone. Couples the redox reaction to proton translocation (for every two electrons transferred, four hydrogen ions are translocated across the cytoplasmic membrane), and thus conserves the redox energy in a proton gradient. This chain is NADH-quinone oxidoreductase subunit B, found in Methylobacterium nodulans (strain LMG 21967 / CNCM I-2342 / ORS 2060).